The sequence spans 301 residues: Chitosanase (301 aa).

An N-terminal signal peptide occupies residues 1–42 (MHMSNARPSKSRTKFLLAFLCFTLMASLFGATALFGPSKAAA). Catalysis depends on E79, which acts as the Proton donor. A disulfide bridge links C92 with C166. The active-site Nucleophile is D97.

It belongs to the glycosyl hydrolase 46 family.

Its subcellular location is the secreted. It catalyses the reaction Endohydrolysis of beta-(1-&gt;4)-linkages between D-glucosamine residues in a partly acetylated chitosan.. In terms of biological role, aids in the defense against invading fungal pathogens by degrading their cell wall chitosan. The sequence is that of Chitosanase (csn) from Niallia circulans (Bacillus circulans).